A 760-amino-acid chain; its full sequence is Cyclin-D-binding Myb-like transcription factor 1 (760 aa).

An interaction with CCND2 region spans residues 1 to 237; that stretch reads MSTVEEDSDT…TPEEIEKLKE (237 aa). The tract at residues 87 to 170 is required for transcriptional activation; it reads VTMTATTEVA…IDILMNNIER (84 aa). A required for DNA-binding region spans residues 87–458; it reads VTMTATTEVA…DNTAISSSPM (372 aa). The interval 176 to 760 is interaction with CCND1, CCND2 and CCND3; it reads GIKDATEIIF…KDVEDLVNCH (585 aa). Residues 225 to 263 form the Myb-like 1 domain; sequence GKYTPEEIEKLKELRIKHGNDWATIGAALGRSASSVKDR. The region spanning 268 to 333 is the HTH myb-type domain; it reads KDTCNTGKWT…KWLNYLNWKQ (66 aa). Residues 306–329 constitute a DNA-binding region (H-T-H motif); sequence WAAVAERVGTRSEKQCRSKWLNYL. A Myb-like 2 domain is found at 339–388; sequence WTKEDEINLILRIAELDVADENDINWDLLAEGWSSVRSPQWLRSKWWTIK. Disordered regions lie at residues 414–435 and 738–760; these read KNNPTLLENKSGSGVPNSNTNS and IGSSLGSPVSEDSKDVEDLVNCH. The required for transcriptional activation stretch occupies residues 459 to 760; sequence AALQIPVQIT…KDVEDLVNCH (302 aa).

It belongs to the DMTF1 family. Interacts with the D-type cyclins CCND1, CCND2 and CCND3. Interaction with D-type cyclins may modulate transcriptional activation by this protein. Phosphorylated by the cyclin-D2/CDK4, cyclin-D3/CDK4 and cyclin-D2/CDK6 complexes and to a lesser extent by the cyclin-D1/CDK4 complex. In terms of tissue distribution, expressed at relatively low levels in colonic mucosa, ovary, peripheral leukocytes, prostate and small intestine, and at higher levels in spleen, testis and thymus. Expressed in multiple regions of the brain and CNS including amygdala, caudate, corpus callosum, hippocampus, substantia nigra and subthalamic nucleus. Isoform 1 is the predominant isoform in monocytes, macrophages and neutrophils, isoform 2 is most strongly expressed in peripheral blood leukocytes and quiescent CD34 positive cells, and isoform 3 is expressed at low levels in all hematopoietic cell types. Expression is frequently reduced in non-small-cell lung carcinomas (NSCLC) due to hemizygous gene deletion, strongly suggesting that this locus is haploinsufficient for tumor suppression. Loss of this locus frequently occurs in tumors which retain wild-type CDKN2A/ARF and p53/TP53 loci. Hemizygous gene deletion has also been observed in leukemic blasts from patients with abnormalities of the long arm of chromosome 7.

It localises to the nucleus. Its function is as follows. Transcriptional activator which activates the CDKN2A/ARF locus in response to Ras-Raf signaling, thereby promoting p53/TP53-dependent growth arrest. Binds to the consensus sequence 5'-CCCG[GT]ATGT-3'. Isoform 1 may cooperate with MYB to activate transcription of the ANPEP gene. Isoform 2 may antagonize transcriptional activation by isoform 1. The sequence is that of Cyclin-D-binding Myb-like transcription factor 1 (DMTF1) from Homo sapiens (Human).